The chain runs to 1230 residues: MKLKEIDRTAMQAWSPAQNHPIYLATGTSAQQLDATFSTNASLEIFELDLSDPSLDMKSCATFSSSHRYHKLIWGPHKMDSKGDVSGVLIAGGENGNIILYDPSKIIAGDKEVVIAQKDKHTGPVRALDVNIFQTNLVASGANESEIYIWDLNNFATPMTPGAKTQPPEDISCIAWNRQVQHILASASPSGRATVWDLRKNEPIIKVSDHSNRMHCSGLAWHPDVATQMVLASEDDRLPVIQMWDLRFASSPLRVLENHARGILAVAWSMADPELLLSCGKDAKILCSNPNTGEVLYELPTNTQWCFDIQWCPRNPAVLSAASFDGRISVYSIMGGSIDGLRQKQVDKLSSSFGNLDPFGTGQPLPPLQIPQQSAQHSIVLPLKKPPKWIRRPVGASFSFGGKLVTFESVAVPLQQGAEQQRRQPVFISQVVTEKDFLNRSAQLQHAVQSQGFIGYCQKKIEASQTEFEKNVWSFLKVNFEEDSRGKYLELLGYRKEDLGQKIALALNKVDGPDVALKDSDQVAQSDGEESPAAEEQLLGERIKEEKQECDFLPSAGGTFNISVSGDIDGLITRALLTGNFESAVDLCLHDNRMADAIILAIAGGQELLAQTQKKYFAKSQSKITRLITAVVMKNWREIVESCDLKNWREALAAVLTYAKPDEFSALCDLLGTRLEREGDSLLRTQACLCYICAGNVERLVACWTKAQDGSSPLSLQDLIEKVVILRKAVQLTQALDTNTVGALLAEKMSQYASLLAAQGSIAAALAFLPDNTNQPNIVQLRDRLCKAQGKPVSGQESSQSPYERQPLSKGRPGPVAGHSQMPRVQTQQYYPHGENPPPPGFIMQGNVIPNPAAPLPTAPGHMPSQLPPYPQPQPYQPAQQYSFGTGGAAAYRPQQPVAPPASNAYPNTPYISPVASYSGQPQMYTAQQASSPTSSSAASFPPPSSGASFQHGGPGAPPSSSAYALPPGTTGTPPAASELPASQRTENQSFQDQASILEGPQNGWNDPPALNRVPKKKKMPENFMPPVPITSPIMNPSGDPQSQGLQQQPSTPGPLSSHASFPQQHLAGGQPFHGVQQPLAQTGMPPSFSKPNTEGAPGAPIGNTIQHVQALPTEKITKKPIPEEHLILKTTFEDLIQRCLSSATDPQTKRKLDDASKRLEFLYDKLREQTLSPTIINGLHSIARSIETRNYSEGLSVHTHIVSTSNFSETSAFMPVLKVVLSQASKLGV.

WD repeat units follow at residues 4–47 (KEID…EIFE), 64–111 (SSSH…AGDK), 120–160 (KHTG…TPMT), 166–206 (QPPE…PIIK), 209–254 (DHSN…SPLR), 258–298 (NHAR…VLYE), and 301–342 (TNTQ…DGLR). Residues 161–470 (PGAKTQPPED…IEASQTEFEK (310 aa)) are interaction with SEC13. Residues 397–429 (SFSFGGKLVTFESVAVPLQQGAEQQRRQPVFIS) form a WD 8; interaction with SEC13 repeat. Arg-423 carries the asymmetric dimethylarginine modification. Residues Ser-526 and Ser-531 each carry the phosphoserine modification. Lys-646 participates in a covalent cross-link: Glycyl lysine isopeptide (Lys-Gly) (interchain with G-Cter in ubiquitin). 2 disordered regions span residues 789 to 905 (QGKP…ASNA) and 924 to 1104 (MYTA…PIGN). The residue at position 798 (Ser-798) is a Phosphoserine. Residues 799–1123 (SQSPYERQPL…TEKITKKPIP (325 aa)) are interaction with PDCD6. Positions 841–847 (GFIMQGN) match the ALG-2-binding site motif-2 (ABS-2) motif. A compositionally biased stretch (pro residues) spans 866–876 (QLPPYPQPQPY). Low complexity-rich tracts occupy residues 930–940 (ASSPTSSSAAS) and 959–975 (PSSS…GTPP). 2 stretches are compositionally biased toward polar residues: residues 981–995 (PASQ…QDQA) and 1033–1064 (PIMN…SFPQ). At Thr-1171 the chain carries Phosphothreonine. Ser-1173 is subject to Phosphoserine. A Glycyl lysine isopeptide (Lys-Gly) (interchain with G-Cter in ubiquitin) cross-link involves residue Lys-1227.

This sequence belongs to the WD repeat SEC31 family. As to quaternary structure, COPII is composed of at least 5 proteins: the SEC23/24 complex, the SEC13/31 complex and SAR1. SEC13 and SEC31 make a 2:2 tetramer that forms the edge element of the COPII outer coat. The tetramer self-assembles in multiple copies to form the complete polyhedral cage. Interacts (via WD 8) with SEC13. Interacts with PDCD6; interaction takes place in response to cytosolic calcium increase and leads to bridge together the BCR(KLHL12) complex and SEC31A, leading to monoubiquitination. Interacts with KLHL12. Post-translationally, monoubiquitinated by the BCR(KLHL12) E3 ubiquitin ligase complex, leading to regulate the size of COPII coats.

The protein localises to the cytoplasm. Its subcellular location is the cytoplasmic vesicle. It localises to the COPII-coated vesicle membrane. The protein resides in the endoplasmic reticulum membrane. Its function is as follows. Component of the coat protein complex II (COPII) which promotes the formation of transport vesicles from the endoplasmic reticulum (ER). The coat has two main functions, the physical deformation of the endoplasmic reticulum membrane into vesicles and the selection of cargo molecules. This chain is Protein transport protein Sec31A (Sec31a), found in Mus musculus (Mouse).